We begin with the raw amino-acid sequence, 410 residues long: Translation initiation factor 2 subunit gamma (410 aa).

Positions 6–203 (QSEVNIGMVG…AIQEFIPTPE (198 aa)) constitute a tr-type G domain. The tract at residues 15 to 22 (GHVDHGKT) is G1. Residues Asp18, Thr22, Gly43, and Ser45 each coordinate Mg(2+). 18 to 23 (DHGKTS) serves as a coordination point for GTP. The segment at 43–47 (GISIR) is G2. Zn(2+) is bound by residues Cys58, Cys61, Cys73, and Cys76. Positions 90-93 (DAPG) are G3. GTP-binding positions include 146–149 (NKID) and 181–183 (SAH). The G4 stretch occupies residues 146 to 149 (NKID). A G5 region spans residues 181 to 183 (SAH).

This sequence belongs to the TRAFAC class translation factor GTPase superfamily. Classic translation factor GTPase family. EIF2G subfamily. Heterotrimer composed of an alpha, a beta and a gamma chain. It depends on Mg(2+) as a cofactor.

It carries out the reaction GTP + H2O = GDP + phosphate + H(+). EIF-2 functions in the early steps of protein synthesis by forming a ternary complex with GTP and initiator tRNA. In Methanococcus maripaludis (strain C7 / ATCC BAA-1331), this protein is Translation initiation factor 2 subunit gamma.